Reading from the N-terminus, the 219-residue chain is Exosomal polycystin-1-interacting protein (219 aa).

An N-terminal signal peptide occupies residues 1 to 19; it reads MAPPSRHCLLLISTLGVFA. Residues N29, N42, N95, N188, and N210 are each glycosylated (N-linked (GlcNAc...) asparagine).

This sequence belongs to the EPCIP family. Homooligomer. Interacts with PKD1 (via the PKD repeats in the N-terminal extracellular region); the interaction is not dependent on N-glycosylation of either protein. N-glycosylated. As to expression, detected in the kidney and in the endothelium of large blood vessels (at protein level).

It is found in the vesicle. The protein localises to the secreted. Its subcellular location is the extracellular exosome. Likely to be involved with PKD1 in the detection, sequestration and exocytosis of senescent mitochondria. This chain is Exosomal polycystin-1-interacting protein, found in Homo sapiens (Human).